The chain runs to 37 residues: Large ribosomal subunit protein bL36c (37 aa).

Belongs to the bacterial ribosomal protein bL36 family.

The protein resides in the plastid. Its subcellular location is the chloroplast. In Phaseolus angularis (Azuki bean), this protein is Large ribosomal subunit protein bL36c.